Consider the following 293-residue polypeptide: Ribosomal protein L11 methyltransferase (293 aa).

Positions 145, 166, 188, and 230 each coordinate S-adenosyl-L-methionine.

It belongs to the methyltransferase superfamily. PrmA family.

Its subcellular location is the cytoplasm. The catalysed reaction is L-lysyl-[protein] + 3 S-adenosyl-L-methionine = N(6),N(6),N(6)-trimethyl-L-lysyl-[protein] + 3 S-adenosyl-L-homocysteine + 3 H(+). Its function is as follows. Methylates ribosomal protein L11. The chain is Ribosomal protein L11 methyltransferase from Shigella sonnei (strain Ss046).